The sequence spans 135 residues: DNA-directed RNA polymerase subunit omega (135 aa).

Belongs to the RNA polymerase subunit omega family. The RNAP catalytic core consists of 2 alpha, 1 beta, 1 beta' and 1 omega subunit. When a sigma factor is associated with the core the holoenzyme is formed, which can initiate transcription.

It carries out the reaction RNA(n) + a ribonucleoside 5'-triphosphate = RNA(n+1) + diphosphate. In terms of biological role, promotes RNA polymerase assembly. Latches the N- and C-terminal regions of the beta' subunit thereby facilitating its interaction with the beta and alpha subunits. This Rhizobium meliloti (strain 1021) (Ensifer meliloti) protein is DNA-directed RNA polymerase subunit omega.